The chain runs to 298 residues: MSLKLDGKKLSLEIEERLRNYILTNKTIAKRNPGLAVIRIGEDPASGVYVGNKEKACSRVGIKSYIFHLKDTVEQKEVEQLLNKLNLDNNIDGMLLQLPISKKFDEQRLISFINPEKDVDGLNEQNIGKLVKNEQAMRSCTPAGIVNLLKSQNIKIEGKKIVVIGRSLLVGKPLSLMMLNLNATVTITHSKTINLNKICKEADILIAAAGKPNLINSSFVKEGAVIIDVGIHRLTSSDKSKTRLCGDVLLEDVIPKVFAYTPVPGGVGPMTVTMLLVNTIFSWQKQFGLSSTLNDLLP.

Residues 165 to 167 (GRS), serine 190, and isoleucine 231 contribute to the NADP(+) site.

This sequence belongs to the tetrahydrofolate dehydrogenase/cyclohydrolase family. In terms of assembly, homodimer.

The enzyme catalyses (6R)-5,10-methylene-5,6,7,8-tetrahydrofolate + NADP(+) = (6R)-5,10-methenyltetrahydrofolate + NADPH. It catalyses the reaction (6R)-5,10-methenyltetrahydrofolate + H2O = (6R)-10-formyltetrahydrofolate + H(+). Its pathway is one-carbon metabolism; tetrahydrofolate interconversion. Catalyzes the oxidation of 5,10-methylenetetrahydrofolate to 5,10-methenyltetrahydrofolate and then the hydrolysis of 5,10-methenyltetrahydrofolate to 10-formyltetrahydrofolate. This chain is Bifunctional protein FolD, found in Prochlorococcus marinus subsp. pastoris (strain CCMP1986 / NIES-2087 / MED4).